A 141-amino-acid chain; its full sequence is Holo-[acyl-carrier-protein] synthase (141 aa).

Mg(2+)-binding residues include Asp7 and Glu57.

Belongs to the P-Pant transferase superfamily. AcpS family. Mg(2+) serves as cofactor.

It is found in the cytoplasm. The catalysed reaction is apo-[ACP] + CoA = holo-[ACP] + adenosine 3',5'-bisphosphate + H(+). Transfers the 4'-phosphopantetheine moiety from coenzyme A to a Ser of acyl-carrier-protein. The protein is Holo-[acyl-carrier-protein] synthase of Corynebacterium efficiens (strain DSM 44549 / YS-314 / AJ 12310 / JCM 11189 / NBRC 100395).